The sequence spans 471 residues: Tetratricopeptide repeat protein 29 (471 aa).

TPR repeat units follow at residues 92-131 (DKLREAAQARSLFWLQRPLEDQPDKLDNFYHYLTKAEAAE), 136-173 (YEEVYNNLYALACYFDNSEDKWVRNHFYERCFKIAQLI), 182-215 (AEAEAHMGLLYEEEGELLKAAEHYEAFHELTQGR), 234-267 (VRTYRLLSDRMLQNRDYKQAIKILIKASEIAREG), 274-307 (GEASYYLGLAHLASGEYETALSVLDRYSEISTSL), 314-347 (GRAYEAMAKVLQSQGEMTEAIKYLEKFVVIARNN), and 354-387 (IQACTMLGDIYNEKGQYNKASDYFQQAFSTAMEV).

Its subcellular location is the cytoplasm. It is found in the cytoskeleton. The protein resides in the flagellum axoneme. In terms of biological role, axonemal protein which is implicated in axonemal and/or peri-axonemal structure assembly and regulates flagellum assembly and beating and therefore sperm motility. This is Tetratricopeptide repeat protein 29 (Ttc29) from Rattus norvegicus (Rat).